Here is a 529-residue protein sequence, read N- to C-terminus: Probable alpha-galactosidase A (529 aa).

The N-terminal stretch at 1-19 is a signal peptide; that stretch reads MKALFAAITMAHALLQTQA. A disulfide bond links C42 and C74. N-linked (GlcNAc...) asparagine glycans are attached at residues N45, N83, N89, and N119. C122 and C152 are disulfide-bonded. D150 acts as the Nucleophile in catalysis. N199 carries N-linked (GlcNAc...) asparagine glycosylation. D208 (proton donor) is an active-site residue. N-linked (GlcNAc...) asparagine glycosylation occurs at N351. The Ricin B-type lectin domain occupies 408-528; the sequence is RVDAVSTGIV…GLPSGVRVSG (121 aa). 2 cysteine pairs are disulfide-bonded: C425-C438 and C462-C475.

This sequence belongs to the glycosyl hydrolase 27 family.

Its subcellular location is the secreted. The enzyme catalyses Hydrolysis of terminal, non-reducing alpha-D-galactose residues in alpha-D-galactosides, including galactose oligosaccharides, galactomannans and galactolipids.. Hydrolyzes a variety of simple alpha-D-galactoside as well as more complex molecules such as oligosaccharides and polysaccharides. This is Probable alpha-galactosidase A (aglA) from Aspergillus terreus (strain NIH 2624 / FGSC A1156).